The primary structure comprises 129 residues: Small ribosomal subunit protein uS13m (129 aa).

Residues 92–129 (HQDGSPLRGQRTHTNARTARKQIRKGNERRLPKEQATD) form a disordered region. Residues 116–129 (KGNERRLPKEQATD) show a composition bias toward basic and acidic residues.

This sequence belongs to the universal ribosomal protein uS13 family. Part of the small ribosomal subunit.

It localises to the mitochondrion. Its function is as follows. Located at the top of the head of the small subunit, it contacts several helices of the 18S rRNA. This Zea mays (Maize) protein is Small ribosomal subunit protein uS13m (RPS13).